Reading from the N-terminus, the 622-residue chain is uncharacterized protein (622 aa).

A signal peptide spans 1 to 20 (MKIKAVAIFLSLLMIISLFS).

This is an uncharacterized protein from Methanocaldococcus jannaschii (strain ATCC 43067 / DSM 2661 / JAL-1 / JCM 10045 / NBRC 100440) (Methanococcus jannaschii).